Here is a 392-residue protein sequence, read N- to C-terminus: Serine protease ea (392 aa).

An N-terminal signal peptide occupies residues 1 to 19; the sequence is MLKPSIICLFLGILAKSSA. Residues 20 to 127 constitute a propeptide, activation peptide; it reads GQFYFPNEAA…GQCGNILSNR (108 aa). The Clip domain maps to 36–89; it reads RCITPNRERALCIHLEDCKYLYGLLTTTPLRDTDRLYLSRSQCGYTNGKVLICC. Intrachain disulfides connect Cys37–Cys88, Cys47–Cys78, and Cys53–Cys89. N-linked (GlcNAc...) asparagine glycosylation occurs at Asn107. 5 cysteine pairs are disulfide-bonded: Cys120–Cys260, Cys158–Cys174, Cys202–Cys212, Cys307–Cys324, and Cys334–Cys367. In terms of domain architecture, Peptidase S1 spans 128–391; sequence IYGGMKTKID…YVDWIQNTIE (264 aa). His173 (charge relay system) is an active-site residue. Residues Glu193, Asp195, Thr198, and Asp201 each coordinate Ca(2+). The active-site Charge relay system is Asp240. Ser338 acts as the Charge relay system in catalysis.

It belongs to the peptidase S1 family. CLIP subfamily. As to quaternary structure, interacts with Spn27A; the two proteins are covalently linked leading to inhibition of ea catalytic activity. Interacts (via Peptidase domain) with snk (via N-terminal prodomain); leads to proteolytic activation of ea by snk. Sulfation of a vitelline membrane component by pip is required for proteolytic cleavage of ea by snk but not for the interaction of ea with snk. Post-translationally, proteolytically cleaved by snk. Activation peptide and active catalytic domain remain associated by a disulfide bond. Processed ea/easter is present in extremely low amounts in the early embryo as it is rapidly converted into a high molecular mass complex made up of ea covalently bound to the serpin Spn27A. Zymogen activation is also controlled by a negative feedback loop from Dorsal.

The protein resides in the secreted. With respect to regulation, activated proteolytically by snk; activation requires both activation of the ndl-gd-snk protease cascade and sulfation of a vitelline membrane component by pip. Inhibited by binding of the serpin Spn27A. Functionally, component of the extracellular signaling pathway that establishes the dorsal-ventral pathway of the embryo. A protease cascade involving ndl, gd, snk and ea results in activation of the spz Toll receptor ligand; acts downstream of ndl, gd and snk and is required for proteolytic processing of spz. Activation of ea requires both activation of the ndl-gd-snk protease cascade and sulfation of a vitelline membrane component by pip. Localized activation of the Toll receptor in the ventral region of the embryo defines cell identities along the dorsal-ventral continuum. In Drosophila melanogaster (Fruit fly), this protein is Serine protease ea.